Here is a 76-residue protein sequence, read N- to C-terminus: Protein CYSTEINE-RICH TRANSMEMBRANE MODULE 11 (76 aa).

Residues 19-45 (GPPPPVGVPPQYYPPPPPPPPPPPPPR) are disordered. The chain crosses the membrane as a helical span at residues 47–63 (VGFLEGLLAALCCCCLV).

This sequence belongs to the CYSTM1 family. As to quaternary structure, heterodimers. Interacts with CYSTM6, CYSTM7 and WIH1/CYSTM13. Mostly expressed in stems, siliques, leaves and flowers and, to a lower extent, in roots.

The protein resides in the cell membrane. It localises to the cytoplasm. Its function is as follows. Involved in resistance to abiotic stress. The sequence is that of Protein CYSTEINE-RICH TRANSMEMBRANE MODULE 11 from Arabidopsis thaliana (Mouse-ear cress).